Consider the following 454-residue polypeptide: Notoamide biosynthesis cluster protein M' (454 aa).

N-linked (GlcNAc...) asparagine glycosylation is found at asparagine 51 and asparagine 74. Residues 205–219 (KARSKEKKPKRKKSK) are compositionally biased toward basic residues. Residues 205 to 224 (KARSKEKKPKRKKSKAEKEH) are disordered. 2 consecutive transmembrane segments (helical) span residues 334–354 (MTTV…SGLF) and 375–395 (FWMY…VWGV).

It localises to the membrane. Its function is as follows. Part of the gene cluster that mediates the biosynthesis of notoamide, a fungal indole alkaloid that belongs to a family of natural products containing a characteristic bicyclo[2.2.2]diazaoctane core. The first step of notoamide biosynthesis involves coupling of L-proline and L-tryptophan by the bimodular NRPS notE', to produce cyclo-L-tryptophan-L-proline called brevianamide F. The reverse prenyltransferase notF' then acts as a deoxybrevianamide E synthase and converts brevianamide F to deoxybrevianamide E via reverse prenylation at C-2 of the indole ring leading to the bicyclo[2.2.2]diazaoctane core. Deoxybrevianamide E is further hydroxylated at C-6 of the indole ring, likely catalyzed by the cytochrome P450 monooxygenase notG', to yield 6-hydroxy-deoxybrevianamide E. 6-hydroxy-deoxybrevianamide E is a specific substrate of the prenyltransferase notC' for normal prenylation at C-7 to produce 6-hydroxy-7-prenyl-deoxybrevianamide, also called notoamide S. As the proposed pivotal branching point in notoamide biosynthesis, notoamide S can be diverted to notoamide E through an oxidative pyran ring closure putatively catalyzed by either notH' cytochrome P450 monooxygenase or the notD' FAD-linked oxidoreductase. This step would be followed by an indole 2,3-epoxidation-initiated pinacol-like rearrangement catalyzed by the notB' FAD-dependent monooxygenase leading to the formation of notoamide C and notoamide D. On the other hand notoamide S is converted to notoamide T by notH' (or notD'), a bifunctional oxidase that also functions as the intramolecular Diels-Alderase responsible for generation of (-)-notoamide T. To generate antipodal (+)-notoaminide T, notH (or notD) in Aspergillus strain MF297-2 is expected to catalyze a Diels-Alder reaction leading to the opposite stereochemistry. The remaining oxidoreductase notD' (or notH') likely catalyzes the oxidative pyran ring formation to yield (-)-stephacidin A. The FAD-dependent monooxygenase notI' is highly similar to notB' and is predicted to catalyze a similar conversion from (-)-stephacidin A to (+)-notoamide B via the 2,3-epoxidation of (-)-stephacidin A followed by a pinacol-type rearrangement. Finally, it remains unclear which enzyme could be responsible for the final hydroxylation steps leading to notoamide A and sclerotiamide. The function of notM' in the notoamide biosynthesis has not been determined yet. This Aspergillus versicolor protein is Notoamide biosynthesis cluster protein M'.